The chain runs to 68 residues: Large ribosomal subunit protein bL31 (68 aa).

Positions 16, 18, 38, and 41 each coordinate Zn(2+).

It belongs to the bacterial ribosomal protein bL31 family. Type A subfamily. In terms of assembly, part of the 50S ribosomal subunit. Zn(2+) serves as cofactor.

In terms of biological role, binds the 23S rRNA. The polypeptide is Large ribosomal subunit protein bL31 (Thiobacillus denitrificans (strain ATCC 25259 / T1)).